We begin with the raw amino-acid sequence, 268 residues long: Small ribosomal subunit protein eS1 (268 aa).

The disordered stretch occupies residues Met1–Val21.

The protein belongs to the eukaryotic ribosomal protein eS1 family. As to quaternary structure, component of the small ribosomal subunit. Mature ribosomes consist of a small (40S) and a large (60S) subunit. The 40S subunit contains about 33 different proteins and 1 molecule of RNA (18S). The 60S subunit contains about 49 different proteins and 3 molecules of RNA (28S, 5.8S and 5S).

The protein localises to the cytoplasm. In terms of biological role, essential for oogenesis; required for late follicle cell development. This Drosophila sechellia (Fruit fly) protein is Small ribosomal subunit protein eS1.